The following is a 301-amino-acid chain: Acetylglutamate kinase (301 aa).

Substrate is bound by residues 72 to 73 (GG), arginine 94, and asparagine 199.

This sequence belongs to the acetylglutamate kinase family. ArgB subfamily.

It localises to the cytoplasm. The catalysed reaction is N-acetyl-L-glutamate + ATP = N-acetyl-L-glutamyl 5-phosphate + ADP. It participates in amino-acid biosynthesis; L-arginine biosynthesis; N(2)-acetyl-L-ornithine from L-glutamate: step 2/4. Its function is as follows. Catalyzes the ATP-dependent phosphorylation of N-acetyl-L-glutamate. The chain is Acetylglutamate kinase from Bartonella tribocorum (strain CIP 105476 / IBS 506).